A 180-amino-acid polypeptide reads, in one-letter code: ATP synthase subunit delta (180 aa).

The protein belongs to the ATPase delta chain family. As to quaternary structure, F-type ATPases have 2 components, F(1) - the catalytic core - and F(0) - the membrane proton channel. F(1) has five subunits: alpha(3), beta(3), gamma(1), delta(1), epsilon(1). F(0) has three main subunits: a(1), b(2) and c(10-14). The alpha and beta chains form an alternating ring which encloses part of the gamma chain. F(1) is attached to F(0) by a central stalk formed by the gamma and epsilon chains, while a peripheral stalk is formed by the delta and b chains.

The protein resides in the cell membrane. Its function is as follows. F(1)F(0) ATP synthase produces ATP from ADP in the presence of a proton or sodium gradient. F-type ATPases consist of two structural domains, F(1) containing the extramembraneous catalytic core and F(0) containing the membrane proton channel, linked together by a central stalk and a peripheral stalk. During catalysis, ATP synthesis in the catalytic domain of F(1) is coupled via a rotary mechanism of the central stalk subunits to proton translocation. Functionally, this protein is part of the stalk that links CF(0) to CF(1). It either transmits conformational changes from CF(0) to CF(1) or is implicated in proton conduction. This chain is ATP synthase subunit delta, found in Enterococcus faecalis (strain ATCC 700802 / V583).